Reading from the N-terminus, the 168-residue chain is Transcriptional regulator MraZ (168 aa).

2 consecutive SpoVT-AbrB domains span residues 8–51 (EYNQ…GGDR) and 90–140 (ALNM…KADT).

The protein belongs to the MraZ family. As to quaternary structure, forms oligomers.

Its subcellular location is the cytoplasm. The protein resides in the nucleoid. This is Transcriptional regulator MraZ from Cereibacter sphaeroides (strain ATCC 17029 / ATH 2.4.9) (Rhodobacter sphaeroides).